Reading from the N-terminus, the 409-residue chain is Nucleoprotein (409 aa).

Disordered stretches follow at residues 1-64 and 167-197; these read MSAG…SNVK and RNSS…VDDD. Positions 30-161 are RNA-binding; that stretch reads GTGQASWFQS…NNYRWDFIAL (132 aa). The CoV N NTD domain maps to 32–157; sequence GQASWFQSLK…GGPDNNYRWD (126 aa). Basic and acidic residues predominate over residues 176–197; sequence ENSRPGSRDSSRGRQRSRVDDD. S192 bears the Phosphoserine; by host mark. The CoV N CTD domain maps to 217–333; that stretch reads SKQKANEMAE…ECVDGVGTRP (117 aa). Residues 228 to 335 form a dimerization region; sequence KYHKRAIAPG…VDGVGTRPKD (108 aa). Residues C322 and C325 are joined by a disulfide bond. The segment at 327–409 is disordered; that stretch reads DGVGTRPKDD…GEGAFDDINI (83 aa). Residues 332–349 show a composition bias toward basic and acidic residues; it reads RPKDDPTPRSRAASKDRN. T374 carries the post-translational modification Phosphothreonine; by host.

It belongs to the gammacoronavirus nucleocapsid protein family. In terms of assembly, homooligomer. Both monomeric and oligomeric forms interact with RNA. Interacts with protein M. Interacts with NSP3; this interaction serves to tether the genome to the newly translated replicase-transcriptase complex at a very early stage of infection. In terms of processing, ADP-ribosylated. The ADP-ribosylation is retained in the virion during infection. Post-translationally, phosphorylated on serine and threonine residues.

Its subcellular location is the virion. The protein localises to the host endoplasmic reticulum-Golgi intermediate compartment. It is found in the host Golgi apparatus. Its function is as follows. Packages the positive strand viral genome RNA into a helical ribonucleocapsid (RNP) and plays a fundamental role during virion assembly through its interactions with the viral genome and membrane protein M. Plays an important role in enhancing the efficiency of subgenomic viral RNA transcription as well as viral replication. The protein is Nucleoprotein of Gallus gallus (Chicken).